A 997-amino-acid polypeptide reads, in one-letter code: MENAHTKTVEEVLGYFGVNESTGLSLEQVKKLKERWGSNELPAEEGKTLLELVIEQFEDLLVRILLLAACISFVLAWFEEGEETITAFVEPFVILLILVANAIVGVWQERNAENAIEALKEYEPEMGKVYRQDRKSVQRIKAKDIVPGDIVEIAVGDKVPADIRLTSIKSTTLRVDQSILTGESVSVIKHTDPVPDPRAVNQDKKNMLFSGTNIAAGKAMGVVVATGVNTEIGKIRDEMVATEQERTPLQQKLDEFGEQLSKVISLICIAVWIINIGHFNDPVHGGSWIRGAIYYFKIAVALAVAAIPEGLPAVITTCLALGTRRMAKKNAIVRSLPSVETLGCTSVICSDKTGTLTTNQMSVCRMFILDKVEGDTCSLNEFTITGSTYAPIGEVHKDDKPVKCHQYDGLVELATICALCNDSALDYNEAKGVYKKFGEATETALTCLVEKMNVFDTELKGLSKIERANACNSVIKQLMKKEFTLEFSRDRKSMSVYCTPNKPSRTSMSKMFVKGAPEGVIDRCTHIRVGSTKVPMTPGVKQKVMSVIREWGSGSDTLRCLALATHDNPLRREEMNLEDSANFIKYETNLTFVGCVGMLDPPRIEVASSVKLCRQAGIRVIMITGDNKGTAVAICRRIGIFGQDEDVTSKAFTGREFDELSPSAQRDACLNARCFARVEPSHKSKIVEFLQSFDEITAMTGDGVNDAPALKKSEIGIAMGSGTAVAKTASEMVLADDNFSTIVAAVEEGRAIYNNMKQFIRYLISSNVGEVVCIFLTAALGFPEALIPVQLLWVNLVTDGLPATALGFNPPDLDIMNKPPRNPKEPLISGWLFFRYLAIGCYVGAATVGAAAWWFIAADGGPRVSFYQLSHFLQCKDDNPDFEGVDCAIFESPYPMTMALSVLVTIEMCNALNSLSENQSLLRMPPWENIWLVGSICLSMSLHFLILYVEPLPLIFQITPLNLTQWLMVLKISLPVILMDETLKFVARNYLEPAILE.

The Cytoplasmic segment spans residues 1–48 (MENAHTKTVEEVLGYFGVNESTGLSLEQVKKLKERWGSNELPAEEGKT). A Phosphoserine modification is found at S38. The chain crosses the membrane as a helical span at residues 49–69 (LLELVIEQFEDLLVRILLLAA). The Lumenal portion of the chain corresponds to 70–89 (CISFVLAWFEEGEETITAFV). The helical transmembrane segment at 90–110 (EPFVILLILVANAIVGVWQER) threads the bilayer. Topologically, residues 111–253 (NAENAIEALK…QERTPLQQKL (143 aa)) are cytoplasmic. A helical transmembrane segment spans residues 254–273 (DEFGEQLSKVISLICIAVWI). The Lumenal segment spans residues 274 to 295 (INIGHFNDPVHGGSWIRGAIYY). Residues Y294 and Y295 each carry the 3'-nitrotyrosine modification. Residues 296–313 (FKIAVALAVAAIPEGLPA) form a helical membrane-spanning segment. Ca(2+)-binding residues include V304, A305, I307, and E309. Over 314 to 756 (VITTCLALGT…EEGRAIYNNM (443 aa)) the chain is Cytoplasmic. The 4-aspartylphosphate intermediate role is filled by D351. Mg(2+) is bound by residues D351 and T353. Position 353 (T353) interacts with ATP. Residue T441 is modified to Phosphothreonine. The ATP site is built by E442, R489, and K514. S531 is subject to Phosphoserine. R559 is an ATP binding site. The interval 575–594 (MNLEDSANFIKYETNLTFVG) is interaction with HAX1. A Phosphoserine modification is found at S580. Residues T624, G625, and D626 each contribute to the ATP site. Phosphoserine is present on residues S661 and S663. Residues R677 and K683 each contribute to the ATP site. D702 is a binding site for Mg(2+). Residue N705 participates in ATP binding. Residues 757-776 (KQFIRYLISSNVGEVVCIFL) form a helical membrane-spanning segment. Positions 767 and 770 each coordinate Ca(2+). The Lumenal segment spans residues 777–786 (TAALGFPEAL). A helical transmembrane segment spans residues 787–807 (IPVQLLWVNLVTDGLPATALG). Residues 787-807 (IPVQLLWVNLVTDGLPATALG) are interaction with PLN. Positions 788–997 (PVQLLWVNLV…RNYLEPAILE (210 aa)) are interaction with TMEM64 and PDIA3. Residues N795, T798, and D799 each contribute to the Ca(2+) site. The Cytoplasmic portion of the chain corresponds to 808-827 (FNPPDLDIMNKPPRNPKEPL). The helical transmembrane segment at 828–850 (ISGWLFFRYLAIGCYVGAATVGA) threads the bilayer. Over 851-896 (AAWWFIAADGGPRVSFYQLSHFLQCKDDNPDFEGVDCAIFESPYPM) the chain is Lumenal. A disulfide bridge links C875 with C887. The helical transmembrane segment at 897 to 916 (TMALSVLVTIEMCNALNSLS) threads the bilayer. Position 907 (E907) interacts with Ca(2+). Topologically, residues 917–929 (ENQSLLRMPPWEN) are cytoplasmic. Residues 930-948 (IWLVGSICLSMSLHFLILY) form a helical membrane-spanning segment. The interval 931–942 (WLVGSICLSMSL) is interaction with PLN. The Lumenal segment spans residues 949 to 963 (VEPLPLIFQITPLNL). Residues 964-984 (TQWLMVLKISLPVILMDETLK) form a helical membrane-spanning segment. Residues 985–997 (FVARNYLEPAILE) are Cytoplasmic-facing.

Belongs to the cation transport ATPase (P-type) (TC 3.A.3) family. Type IIA subfamily. Interacts with sarcolipin (SLN); the interaction inhibits ATP2A2 Ca(2+) affinity. Interacts with phospholamban (PLN); the interaction inhibits ATP2A2 Ca(2+) affinity. Interacts with myoregulin (MRLN). Interacts with ARLN and ERLN; the interactions inhibit ATP2A2 Ca(2+) affinity. Interacts with STRIT1/DWORF; the interaction results in activation of ATP2A2. Interacts with the monomeric forms of SLN, PLN, ARLN, ERLN and STRI1/DWORF. Interacts with HAX1. Interacts with S100A8 and S100A9. Interacts with SLC35G1 and STIM1. Interacts with TMEM203. Interacts with TMEM64 and PDIA3. Interacts with TMX1. Interacts with TMX2. Interacts with VMP1; VMP1 competes with PLN and SLN to prevent them from forming an inhibitory complex with ATP2A2. Interacts with ULK1. Interacts with S100A1 in a Ca(2+)-dependent manner. Interacts with TUNAR. Interacts with FLVCR2; this interaction occurs in the absence of heme and promotes ATP2A2 proteasomal degradation; this complex is dissociated upon heme binding. Interacts with FNIP1. As to quaternary structure, interacts with TRAM2 (via C-terminus). The cofactor is Mg(2+). In terms of processing, nitrated under oxidative stress. Nitration on the two tyrosine residues inhibits catalytic activity. Serotonylated on Gln residues by TGM2 in response to hypoxia, leading to its inactivation. As to expression, isoform 1 is expressed in the heart.

Its subcellular location is the endoplasmic reticulum membrane. The protein localises to the sarcoplasmic reticulum membrane. The enzyme catalyses Ca(2+)(in) + ATP + H2O = Ca(2+)(out) + ADP + phosphate + H(+). Has different conformational states with differential Ca2+ affinity. The E1 conformational state (active form) shows high Ca(2+) affinity, while the E2 state exhibits low Ca(2+) affinity. Binding of ATP allosterically increases its affinity for subsequent binding of Ca2+. Reversibly inhibited by phospholamban (PLN) at low calcium concentrations. PLN inhibits ATP2A2 Ca(2+) affinity by disrupting its allosteric activation by ATP. Inhibited by sarcolipin (SLN) and myoregulin (MRLN). The inhibition is blocked by VMP1. Enhanced by STRIT1/DWORF; STRIT1 increases activity by displacing sarcolipin (SLN), phospholamban (PLN) and myoregulin (MRLN). Stabilizes SERCA2 in its E2 state. This magnesium-dependent enzyme catalyzes the hydrolysis of ATP coupled with the translocation of calcium from the cytosol to the sarcoplasmic reticulum lumen. Involved in autophagy in response to starvation. Upon interaction with VMP1 and activation, controls ER-isolation membrane contacts for autophagosome formation. Also modulates ER contacts with lipid droplets, mitochondria and endosomes. In coordination with FLVCR2 mediates heme-stimulated switching from mitochondrial ATP synthesis to thermogenesis. Its function is as follows. Involved in the regulation of the contraction/relaxation cycle. Acts as a regulator of TNFSF11-mediated Ca(2+) signaling pathways via its interaction with TMEM64 which is critical for the TNFSF11-induced CREB1 activation and mitochondrial ROS generation necessary for proper osteoclast generation. Association between TMEM64 and SERCA2 in the ER leads to cytosolic Ca(2+) spiking for activation of NFATC1 and production of mitochondrial ROS, thereby triggering Ca(2+) signaling cascades that promote osteoclast differentiation and activation. The sequence is that of Sarcoplasmic/endoplasmic reticulum calcium ATPase 2 (ATP2A2) from Felis catus (Cat).